Reading from the N-terminus, the 415-residue chain is Serine hydroxymethyltransferase (415 aa).

(6S)-5,6,7,8-tetrahydrofolate is bound by residues Leu117 and 121 to 123 (GHL). Lys226 carries the post-translational modification N6-(pyridoxal phosphate)lysine. Residue Glu241 coordinates (6S)-5,6,7,8-tetrahydrofolate.

The protein belongs to the SHMT family. As to quaternary structure, homodimer. Pyridoxal 5'-phosphate serves as cofactor.

The protein localises to the cytoplasm. It carries out the reaction (6R)-5,10-methylene-5,6,7,8-tetrahydrofolate + glycine + H2O = (6S)-5,6,7,8-tetrahydrofolate + L-serine. It functions in the pathway one-carbon metabolism; tetrahydrofolate interconversion. The protein operates within amino-acid biosynthesis; glycine biosynthesis; glycine from L-serine: step 1/1. In terms of biological role, catalyzes the reversible interconversion of serine and glycine with tetrahydrofolate (THF) serving as the one-carbon carrier. This reaction serves as the major source of one-carbon groups required for the biosynthesis of purines, thymidylate, methionine, and other important biomolecules. Also exhibits THF-independent aldolase activity toward beta-hydroxyamino acids, producing glycine and aldehydes, via a retro-aldol mechanism. The chain is Serine hydroxymethyltransferase from Bacillus subtilis (strain 168).